Here is a 535-residue protein sequence, read N- to C-terminus: RNA-splicing ligase RtcB homolog 1 (535 aa).

Residues 1 to 16 are compositionally biased toward basic residues; that stretch reads MAKSRYSRKNKGKKLQ. Positions 1-29 are disordered; it reads MAKSRYSRKNKGKKLQRVQENTVSTEEKS. Mn(2+) contacts are provided by Asp152, Cys155, His260, His292, and His383. Position 259–263 (259–263) interacts with GMP; the sequence is NHYLE. GMP contacts are provided by residues 383–384, 432–435, Ser439, 458–461, and Lys534; these read HN, GGSM, and HGAG. His458 acts as the GMP-histidine intermediate in catalysis.

Belongs to the RtcB family. As to quaternary structure, catalytic component of the tRNA-splicing ligase complex. Requires Mn(2+) as cofactor.

The catalysed reaction is a 3'-end 3'-phospho-ribonucleotide-RNA + a 5'-end dephospho-ribonucleoside-RNA + GTP = a ribonucleotidyl-ribonucleotide-RNA + GMP + diphosphate. The enzyme catalyses a 3'-end 2',3'-cyclophospho-ribonucleotide-RNA + a 5'-end dephospho-ribonucleoside-RNA + GTP + H2O = a ribonucleotidyl-ribonucleotide-RNA + GMP + diphosphate + H(+). Catalytic subunit of the tRNA-splicing ligase complex that acts by directly joining spliced tRNA halves to mature-sized tRNAs by incorporating the precursor-derived splice junction phosphate into the mature tRNA as a canonical 3',5'-phosphodiester. May act as an RNA ligase with broad substrate specificity, and may function toward other RNAs. The polypeptide is RNA-splicing ligase RtcB homolog 1 (Entamoeba dispar (strain ATCC PRA-260 / SAW760)).